The primary structure comprises 587 residues: Probable pectinesterase/pectinesterase inhibitor 61 (587 aa).

Residues 1–23 (MGYDRLGPSGPSNPNQKDPATSL) form a disordered region. Over residues 10–19 (GPSNPNQKDP) the composition is skewed to polar residues. Residues 35–55 (ILFTLAVLVVGVVCFGIFAGI) traverse the membrane as a helical segment. The tract at residues 69-223 (RKPTQAISRT…SEMVSNCLAI (155 aa)) is pectinesterase inhibitor 61. Positions 273-571 (DITVSKDGSG…FTVAQFISGS (299 aa)) are pectinesterase 61. Substrate contacts are provided by Thr349 and Gln379. The active-site Proton donor; for pectinesterase activity is Asp402. The cysteines at positions 416 and 436 are disulfide-linked. The active-site Nucleophile; for pectinesterase activity is Asp423. Substrate contacts are provided by Arg491 and Trp493.

It in the N-terminal section; belongs to the PMEI family. This sequence in the C-terminal section; belongs to the pectinesterase family. Expressed in siliques, floral stems and rosettes leaves.

It is found in the membrane. It catalyses the reaction [(1-&gt;4)-alpha-D-galacturonosyl methyl ester](n) + n H2O = [(1-&gt;4)-alpha-D-galacturonosyl](n) + n methanol + n H(+). The protein operates within glycan metabolism; pectin degradation; 2-dehydro-3-deoxy-D-gluconate from pectin: step 1/5. In terms of biological role, acts in the modification of cell walls via demethylesterification of cell wall pectin. In Arabidopsis thaliana (Mouse-ear cress), this protein is Probable pectinesterase/pectinesterase inhibitor 61 (PME61).